Reading from the N-terminus, the 199-residue chain is NAD(P)H dehydrogenase (quinone) (199 aa).

Positions 4 to 190 (VLVLYYSAYG…GGARYQGKVI (187 aa)) constitute a Flavodoxin-like domain. Residues 10–15 (SAYGHI) and 78–80 (TRF) contribute to the FMN site. Tyr12 contributes to the NAD(+) binding site. A substrate-binding site is contributed by Trp98. FMN-binding positions include 113–119 (STASQHG) and His134.

It belongs to the WrbA family. FMN is required as a cofactor.

It catalyses the reaction a quinone + NADH + H(+) = a quinol + NAD(+). The catalysed reaction is a quinone + NADPH + H(+) = a quinol + NADP(+). This chain is NAD(P)H dehydrogenase (quinone), found in Rhodopseudomonas palustris (strain BisB18).